We begin with the raw amino-acid sequence, 594 residues long: Cytoplasmic polyadenylation element-binding protein 2 (594 aa).

Positions 72–90 (KEREKVDEEKEGVERREEN) are enriched in basic and acidic residues. Disordered stretches follow at residues 72–91 (KERE…EENG) and 367–388 (GGGF…STSE). Residues 367-378 (GGGFNSGSGSGN) show a composition bias toward gly residues. Residues 458–540 (LVAFIGGVPR…KRVEIKPYFF (83 aa)) enclose the RRM domain.

Functionally, cytoplasmic polyadenylation element binding protein that binds to and regulates the translation of specific mRNAs. This chain is Cytoplasmic polyadenylation element-binding protein 2 (cpb-2), found in Caenorhabditis japonica.